Here is a 549-residue protein sequence, read N- to C-terminus: Chaperonin GroEL (549 aa).

ATP contacts are provided by residues 30-33 (TLGP), Lys-51, 87-91 (DGTTT), Gly-415, and Asp-497.

The protein belongs to the chaperonin (HSP60) family. Forms a cylinder of 14 subunits composed of two heptameric rings stacked back-to-back. Interacts with the co-chaperonin GroES.

It is found in the cytoplasm. It carries out the reaction ATP + H2O + a folded polypeptide = ADP + phosphate + an unfolded polypeptide.. Functionally, together with its co-chaperonin GroES, plays an essential role in assisting protein folding. The GroEL-GroES system forms a nano-cage that allows encapsulation of the non-native substrate proteins and provides a physical environment optimized to promote and accelerate protein folding. This Pectobacterium atrosepticum (strain SCRI 1043 / ATCC BAA-672) (Erwinia carotovora subsp. atroseptica) protein is Chaperonin GroEL.